A 459-amino-acid chain; its full sequence is Methylenetetrahydrofolate--tRNA-(uracil-5-)-methyltransferase TrmFO (459 aa).

26-31 serves as a coordination point for FAD; the sequence is GGGLAG.

Belongs to the MnmG family. TrmFO subfamily. Requires FAD as cofactor.

The protein localises to the cytoplasm. The enzyme catalyses uridine(54) in tRNA + (6R)-5,10-methylene-5,6,7,8-tetrahydrofolate + NADH + H(+) = 5-methyluridine(54) in tRNA + (6S)-5,6,7,8-tetrahydrofolate + NAD(+). The catalysed reaction is uridine(54) in tRNA + (6R)-5,10-methylene-5,6,7,8-tetrahydrofolate + NADPH + H(+) = 5-methyluridine(54) in tRNA + (6S)-5,6,7,8-tetrahydrofolate + NADP(+). Catalyzes the folate-dependent formation of 5-methyl-uridine at position 54 (M-5-U54) in all tRNAs. The polypeptide is Methylenetetrahydrofolate--tRNA-(uracil-5-)-methyltransferase TrmFO (Synechococcus sp. (strain JA-2-3B'a(2-13)) (Cyanobacteria bacterium Yellowstone B-Prime)).